The primary structure comprises 493 residues: Ketol-acid reductoisomerase (NADP(+)) (493 aa).

One can recognise a KARI N-terminal Rossmann domain in the interval 17-208 (LGKCRFMKRE…GGDRAGVLES (192 aa)). NADP(+)-binding positions include 45 to 48 (CGAQ), Arg-68, Arg-76, Ser-78, and 108 to 110 (DKQ). His-132 is a catalytic residue. Gly-158 is a binding site for NADP(+). KARI C-terminal knotted domains follow at residues 209-353 (SFIA…SEQE) and 354-486 (YYDK…MTDM). Asp-217, Glu-221, Glu-389, and Glu-393 together coordinate Mg(2+). A substrate-binding site is contributed by Ser-414.

This sequence belongs to the ketol-acid reductoisomerase family. Mg(2+) serves as cofactor.

It catalyses the reaction (2R)-2,3-dihydroxy-3-methylbutanoate + NADP(+) = (2S)-2-acetolactate + NADPH + H(+). The catalysed reaction is (2R,3R)-2,3-dihydroxy-3-methylpentanoate + NADP(+) = (S)-2-ethyl-2-hydroxy-3-oxobutanoate + NADPH + H(+). It functions in the pathway amino-acid biosynthesis; L-isoleucine biosynthesis; L-isoleucine from 2-oxobutanoate: step 2/4. The protein operates within amino-acid biosynthesis; L-valine biosynthesis; L-valine from pyruvate: step 2/4. In terms of biological role, involved in the biosynthesis of branched-chain amino acids (BCAA). Catalyzes an alkyl-migration followed by a ketol-acid reduction of (S)-2-acetolactate (S2AL) to yield (R)-2,3-dihydroxy-isovalerate. In the isomerase reaction, S2AL is rearranged via a Mg-dependent methyl migration to produce 3-hydroxy-3-methyl-2-ketobutyrate (HMKB). In the reductase reaction, this 2-ketoacid undergoes a metal-dependent reduction by NADPH to yield (R)-2,3-dihydroxy-isovalerate. The polypeptide is Ketol-acid reductoisomerase (NADP(+)) (Colwellia psychrerythraea (strain 34H / ATCC BAA-681) (Vibrio psychroerythus)).